We begin with the raw amino-acid sequence, 257 residues long: Hydroxyacylglutathione hydrolase (257 aa).

Positions 58, 60, 62, 63, 116, 135, and 173 each coordinate Zn(2+).

Belongs to the metallo-beta-lactamase superfamily. Glyoxalase II family. As to quaternary structure, monomer. Zn(2+) serves as cofactor.

It catalyses the reaction an S-(2-hydroxyacyl)glutathione + H2O = a 2-hydroxy carboxylate + glutathione + H(+). It participates in secondary metabolite metabolism; methylglyoxal degradation; (R)-lactate from methylglyoxal: step 2/2. In terms of biological role, thiolesterase that catalyzes the hydrolysis of S-D-lactoyl-glutathione to form glutathione and D-lactic acid. This is Hydroxyacylglutathione hydrolase from Brucella melitensis biotype 1 (strain ATCC 23456 / CCUG 17765 / NCTC 10094 / 16M).